A 540-amino-acid chain; its full sequence is GMP synthase [glutamine-hydrolyzing] (540 aa).

Positions 24–217 (KILIVDFGSQ…VRKVAGLTGD (194 aa)) constitute a Glutamine amidotransferase type-1 domain. Cys-101 serves as the catalytic Nucleophile. Catalysis depends on residues His-191 and Glu-193. Residues 218-415 (WTMRAFREEA…LGLPEIFVGR (198 aa)) enclose the GMPS ATP-PPase domain. 245 to 251 (SGGVDSS) is an ATP binding site.

As to quaternary structure, homodimer.

The enzyme catalyses XMP + L-glutamine + ATP + H2O = GMP + L-glutamate + AMP + diphosphate + 2 H(+). It participates in purine metabolism; GMP biosynthesis; GMP from XMP (L-Gln route): step 1/1. Functionally, catalyzes the synthesis of GMP from XMP. This is GMP synthase [glutamine-hydrolyzing] from Nitrobacter hamburgensis (strain DSM 10229 / NCIMB 13809 / X14).